A 220-amino-acid chain; its full sequence is V-set and transmembrane domain-containing protein 2-like protein (220 aa).

An N-terminal signal peptide occupies residues 1–24 (MGAPLAAALGALHYLALFLQLGGA). The 118-residue stretch at 41–158 (ALFTETPHDM…DGGRGVPRVL (118 aa)) folds into the Ig-like domain. Cys62 and Cys142 form a disulfide bridge. Pro residues predominate over residues 165–180 (PAPPRAPRPRGQPPGE). Residues 165-220 (PAPPRAPRPRGQPPGEEPGRGPTLLFLIILPGTGSGTPREAEPHQPHAGGCPARQS) are disordered.

The chain is V-set and transmembrane domain-containing protein 2-like protein (Vstm2l) from Mus musculus (Mouse).